The chain runs to 188 residues: Elongation factor P (188 aa).

It belongs to the elongation factor P family.

It localises to the cytoplasm. The protein operates within protein biosynthesis; polypeptide chain elongation. In terms of biological role, involved in peptide bond synthesis. Stimulates efficient translation and peptide-bond synthesis on native or reconstituted 70S ribosomes in vitro. Probably functions indirectly by altering the affinity of the ribosome for aminoacyl-tRNA, thus increasing their reactivity as acceptors for peptidyl transferase. The sequence is that of Elongation factor P from Leptospira interrogans serogroup Icterohaemorrhagiae serovar copenhageni (strain Fiocruz L1-130).